The chain runs to 1169 residues: DNA-directed RNA polymerase subunit beta (1169 aa).

Belongs to the RNA polymerase beta chain family. The RNAP catalytic core consists of 2 alpha, 1 beta, 1 beta' and 1 omega subunit. When a sigma factor is associated with the core the holoenzyme is formed, which can initiate transcription. Interacts with RbpA, which partially restores Rif-inhibited transcription.

The enzyme catalyses RNA(n) + a ribonucleoside 5'-triphosphate = RNA(n+1) + diphosphate. DNA-dependent RNA polymerase catalyzes the transcription of DNA into RNA using the four ribonucleoside triphosphates as substrates. This subunit often mutates to generate rifampicin (Rif) resistance. Interaction with RbpA partially restores Rif-inhibited transcription; once the subunit is Rif-resistant however RbpA no longer stimulates transcription. The chain is DNA-directed RNA polymerase subunit beta from Mycolicibacterium smegmatis (strain ATCC 700084 / mc(2)155) (Mycobacterium smegmatis).